Consider the following 511-residue polypeptide: 3-octaprenyl-4-hydroxybenzoate carboxy-lyase (511 aa).

Asn-176 serves as a coordination point for Mn(2+). Prenylated FMN contacts are provided by residues 179 to 181, 193 to 195, and 198 to 199; these read IYR, RWL, and RG. Glu-242 is a Mn(2+) binding site. Asp-311 serves as the catalytic Proton donor.

Belongs to the UbiD family. In terms of assembly, homohexamer. It depends on prenylated FMN as a cofactor. Mn(2+) is required as a cofactor.

It localises to the cell membrane. It carries out the reaction a 4-hydroxy-3-(all-trans-polyprenyl)benzoate + H(+) = a 2-(all-trans-polyprenyl)phenol + CO2. The protein operates within cofactor biosynthesis; ubiquinone biosynthesis. Functionally, catalyzes the decarboxylation of 3-octaprenyl-4-hydroxy benzoate to 2-octaprenylphenol, an intermediate step in ubiquinone biosynthesis. The sequence is that of 3-octaprenyl-4-hydroxybenzoate carboxy-lyase from Laribacter hongkongensis (strain HLHK9).